The following is a 158-amino-acid chain: uncharacterized protein (158 aa).

This is an uncharacterized protein from Acidianus convivator (ABV).